A 248-amino-acid chain; its full sequence is Pathogenesis-related thaumatin-like protein 3.4 (248 aa).

The N-terminal stretch at 1 to 25 (MARAILWVLLTVMAVSLLLHAGVEG) is a signal peptide. 8 disulfides stabilise this stretch: Cys-34–Cys-227, Cys-75–Cys-85, Cys-90–Cys-96, Cys-141–Cys-216, Cys-146–Cys-199, Cys-154–Cys-164, Cys-168–Cys-177, and Cys-178–Cys-186. An N-linked (GlcNAc...) asparagine glycan is attached at Asn-235.

It belongs to the thaumatin family. As to expression, mainly expressed in male and female strobili, and, at lower levels, in roots of seedlings and saplings.

May be involved in disease resistance. The polypeptide is Pathogenesis-related thaumatin-like protein 3.4 (Cryptomeria japonica (Japanese cedar)).